A 489-amino-acid chain; its full sequence is Protein nucleotidyltransferase YdiU (489 aa).

Positions 88, 90, 91, 111, 123, 124, 174, and 181 each coordinate ATP. The Proton acceptor role is filled by Asp250. Asn251 and Asp260 together coordinate Mg(2+). Asp260 lines the ATP pocket.

The protein belongs to the SELO family. Mg(2+) serves as cofactor. The cofactor is Mn(2+).

It catalyses the reaction L-seryl-[protein] + ATP = 3-O-(5'-adenylyl)-L-seryl-[protein] + diphosphate. The catalysed reaction is L-threonyl-[protein] + ATP = 3-O-(5'-adenylyl)-L-threonyl-[protein] + diphosphate. The enzyme catalyses L-tyrosyl-[protein] + ATP = O-(5'-adenylyl)-L-tyrosyl-[protein] + diphosphate. It carries out the reaction L-histidyl-[protein] + UTP = N(tele)-(5'-uridylyl)-L-histidyl-[protein] + diphosphate. It catalyses the reaction L-seryl-[protein] + UTP = O-(5'-uridylyl)-L-seryl-[protein] + diphosphate. The catalysed reaction is L-tyrosyl-[protein] + UTP = O-(5'-uridylyl)-L-tyrosyl-[protein] + diphosphate. Nucleotidyltransferase involved in the post-translational modification of proteins. It can catalyze the addition of adenosine monophosphate (AMP) or uridine monophosphate (UMP) to a protein, resulting in modifications known as AMPylation and UMPylation. This Vibrio cholerae serotype O1 (strain ATCC 39315 / El Tor Inaba N16961) protein is Protein nucleotidyltransferase YdiU.